Here is a 352-residue protein sequence, read N- to C-terminus: DNA polymerase IV (352 aa).

The UmuC domain occupies 6 to 187 (IIHIDCDCFY…LPVSKLHGVG (182 aa)). Residues D10 and D105 each contribute to the Mg(2+) site. E106 is an active-site residue.

This sequence belongs to the DNA polymerase type-Y family. Monomer. Requires Mg(2+) as cofactor.

Its subcellular location is the cytoplasm. The catalysed reaction is DNA(n) + a 2'-deoxyribonucleoside 5'-triphosphate = DNA(n+1) + diphosphate. Its function is as follows. Poorly processive, error-prone DNA polymerase involved in untargeted mutagenesis. Copies undamaged DNA at stalled replication forks, which arise in vivo from mismatched or misaligned primer ends. These misaligned primers can be extended by PolIV. Exhibits no 3'-5' exonuclease (proofreading) activity. May be involved in translesional synthesis, in conjunction with the beta clamp from PolIII. This chain is DNA polymerase IV, found in Ectopseudomonas mendocina (strain ymp) (Pseudomonas mendocina).